We begin with the raw amino-acid sequence, 196 residues long: MLVPTVVEQTSRGERAYDIYSRLLKDRIIMLSGEVNDQMANSVIAQLLFLDAQDSEKDIYLYINSPGGVITSGLAMLDTMNFIKSDVQTIAIGMAASMASVLLAGGTKGKRFALPNSTILIHQPSGGAQGQQTEIEIAAEEILKTRRKMNQILADATGQTIEQIKKDTERDHYMSAQEAKDYGLIDDILVNKNTQK.

Serine 97 acts as the Nucleophile in catalysis. The active site involves histidine 122.

This sequence belongs to the peptidase S14 family. As to quaternary structure, fourteen ClpP subunits assemble into 2 heptameric rings which stack back to back to give a disk-like structure with a central cavity, resembling the structure of eukaryotic proteasomes.

The protein resides in the cytoplasm. The catalysed reaction is Hydrolysis of proteins to small peptides in the presence of ATP and magnesium. alpha-casein is the usual test substrate. In the absence of ATP, only oligopeptides shorter than five residues are hydrolyzed (such as succinyl-Leu-Tyr-|-NHMec, and Leu-Tyr-Leu-|-Tyr-Trp, in which cleavage of the -Tyr-|-Leu- and -Tyr-|-Trp bonds also occurs).. Its function is as follows. Cleaves peptides in various proteins in a process that requires ATP hydrolysis. Has a chymotrypsin-like activity. Plays a major role in the degradation of misfolded proteins. The chain is ATP-dependent Clp protease proteolytic subunit from Lacticaseibacillus paracasei (strain ATCC 334 / BCRC 17002 / CCUG 31169 / CIP 107868 / KCTC 3260 / NRRL B-441) (Lactobacillus paracasei).